The following is a 177-amino-acid chain: Large ribosomal subunit protein uL6 (177 aa).

Belongs to the universal ribosomal protein uL6 family. Part of the 50S ribosomal subunit.

This protein binds to the 23S rRNA, and is important in its secondary structure. It is located near the subunit interface in the base of the L7/L12 stalk, and near the tRNA binding site of the peptidyltransferase center. The protein is Large ribosomal subunit protein uL6 of Vibrio parahaemolyticus serotype O3:K6 (strain RIMD 2210633).